We begin with the raw amino-acid sequence, 472 residues long: Zinc finger imprinted 3 (472 aa).

In terms of domain architecture, KRAB spans Val8 to Ala80. C2H2-type zinc fingers lie at residues Leu167–His189, Phe195–His217, Tyr223–His245, Tyr251–His273, Tyr279–His301, Phe307–His329, Tyr335–His357, Tyr363–His385, Tyr391–His413, Tyr419–His441, and Tyr447–His470.

It belongs to the krueppel C2H2-type zinc-finger protein family.

Its subcellular location is the nucleus. Its function is as follows. May be involved in transcriptional regulation. This chain is Zinc finger imprinted 3 (ZIM3), found in Homo sapiens (Human).